The sequence spans 266 residues: Putative carbamate hydrolase RutD (266 aa).

Belongs to the AB hydrolase superfamily. Hydrolase RutD family.

The enzyme catalyses carbamate + 2 H(+) = NH4(+) + CO2. Functionally, involved in pyrimidine catabolism. May facilitate the hydrolysis of carbamate, a reaction that can also occur spontaneously. In Escherichia coli O157:H7, this protein is Putative carbamate hydrolase RutD.